A 184-amino-acid chain; its full sequence is Photosystem I assembly protein Ycf4 (184 aa).

2 consecutive transmembrane segments (helical) span residues 22–42 and 57–77; these read LCWAIILFLGSLGFLLVGTSS and ILFFPQGIVMSFYGIAGLFIS.

Belongs to the Ycf4 family.

It localises to the plastid. The protein resides in the chloroplast thylakoid membrane. In terms of biological role, seems to be required for the assembly of the photosystem I complex. This chain is Photosystem I assembly protein Ycf4, found in Daucus carota (Wild carrot).